The chain runs to 314 residues: Carbamate kinase (314 aa).

This sequence belongs to the carbamate kinase family.

The protein localises to the cytoplasm. It carries out the reaction hydrogencarbonate + NH4(+) + ATP = carbamoyl phosphate + ADP + H2O + H(+). Its pathway is metabolic intermediate metabolism; carbamoyl phosphate degradation; CO(2) and NH(3) from carbamoyl phosphate: step 1/1. This chain is Carbamate kinase (arcC), found in Latilactobacillus sakei (Lactobacillus sakei).